Here is a 388-residue protein sequence, read N- to C-terminus: Staphopain A (388 aa).

Residues 1 to 25 form the signal peptide; that stretch reads MKRNFPKLIALSLIFSLSVTPIANA. The propeptide occupies 26 to 214; it reads ESNSNIKAKD…TSQFKSNNYT (189 aa). Active-site residues include C238, H334, and N355.

It belongs to the peptidase C47 family. In terms of assembly, in the cytoplasm, prematurely activated/folded ScpA forms a stable non-covalent complex with ScpB. In terms of processing, cleavage leads to the activation of ScpA probably by an auto-catalytic manner.

It is found in the secreted. It carries out the reaction Broad endopeptidase action on proteins including elastin, but rather limited hydrolysis of small-molecule substrates. Assays are conveniently made with hemoglobin, casein or Z-Phe-Arg-NHMec as substrate.. With respect to regulation, prematurely activated/folded staphopain A is inhibited by staphostatin A (ScpB), which is probably required to protect staphylococcal cytoplasmic proteins from degradation by ScpA. Functionally, cysteine protease that plays an important role in the inhibition of host innate immune response. Cleaves host elastins found in connective tissues, pulmonary surfactant protein A in the lungs, and the chemokine receptor CXCR2 on leukocytes. Proteolytic cleavage of surfactant protein A impairs bacterial phagocytosis by neutrophils while CXCR2 degradation blocks neutrophil activation and chemotaxis. Additionally, promotes vascular leakage by activating the plasma kallikerin/kinin system, resulting in hypotension. The sequence is that of Staphopain A (sspP) from Staphylococcus aureus (strain COL).